The following is a 278-amino-acid chain: 4-deoxy-L-threo-5-hexosulose-uronate ketol-isomerase (278 aa).

Zn(2+) is bound by residues His196, His198, Glu203, and His245.

The protein belongs to the KduI family. Zn(2+) serves as cofactor.

The enzyme catalyses 5-dehydro-4-deoxy-D-glucuronate = 3-deoxy-D-glycero-2,5-hexodiulosonate. The protein operates within glycan metabolism; pectin degradation; 2-dehydro-3-deoxy-D-gluconate from pectin: step 4/5. In terms of biological role, catalyzes the isomerization of 5-dehydro-4-deoxy-D-glucuronate to 3-deoxy-D-glycero-2,5-hexodiulosonate. This is 4-deoxy-L-threo-5-hexosulose-uronate ketol-isomerase from Enterobacter sp. (strain 638).